Here is a 265-residue protein sequence, read N- to C-terminus: Cyclin-B2-5 (265 aa).

The protein belongs to the cyclin family. Cyclin AB subfamily.

The protein is Cyclin-B2-5 (CYCB2-5) of Arabidopsis thaliana (Mouse-ear cress).